We begin with the raw amino-acid sequence, 544 residues long: Chaperonin GroEL 2 (544 aa).

ATP is bound by residues Thr29 to Pro32, Asp86 to Thr90, Gly413, Asn479 to Ala481, and Asp495.

Belongs to the chaperonin (HSP60) family. Forms a cylinder of 14 subunits composed of two heptameric rings stacked back-to-back. Interacts with the co-chaperonin GroES.

It is found in the cytoplasm. It carries out the reaction ATP + H2O + a folded polypeptide = ADP + phosphate + an unfolded polypeptide.. Its function is as follows. Together with its co-chaperonin GroES, plays an essential role in assisting protein folding. The GroEL-GroES system forms a nano-cage that allows encapsulation of the non-native substrate proteins and provides a physical environment optimized to promote and accelerate protein folding. The sequence is that of Chaperonin GroEL 2 from Synechococcus sp. (strain CC9605).